A 145-amino-acid chain; its full sequence is Phospholipase A2 (145 aa).

A signal peptide spans 1–15 (MRLLVLAALLTVGAG). Pyrrolidone carboxylic acid is present on Gln16. The propeptide at 16–22 (QAGLNSR) is removed by trypsin. 7 cysteine pairs are disulfide-bonded: Cys33–Cys99, Cys49–Cys145, Cys51–Cys67, Cys66–Cys127, Cys73–Cys120, Cys83–Cys113, and Cys106–Cys118. Ca(2+) contacts are provided by Tyr50, Gly52, and Gly54. His70 is an active-site residue. Asp71 is a binding site for Ca(2+). Asp121 is an active-site residue.

The protein belongs to the phospholipase A2 family. Monomer or homodimer. Ca(2+) serves as cofactor. Activated by trypsin cleavage in the duodenum. Can also be activated by thrombin or autocatalytically.

It localises to the secreted. The enzyme catalyses a 1,2-diacyl-sn-glycero-3-phosphocholine + H2O = a 1-acyl-sn-glycero-3-phosphocholine + a fatty acid + H(+). The catalysed reaction is 1,2-ditetradecanoyl-sn-glycero-3-phosphocholine + H2O = 1-tetradecanoyl-sn-glycero-3-phosphocholine + tetradecanoate + H(+). It carries out the reaction 1,2-dihexadecanoyl-sn-glycero-3-phosphocholine + H2O = 1-hexadecanoyl-sn-glycero-3-phosphocholine + hexadecanoate + H(+). It catalyses the reaction 1-hexadecanoyl-2-(9Z-octadecenoyl)-sn-glycero-3-phosphocholine + H2O = 1-hexadecanoyl-sn-glycero-3-phosphocholine + (9Z)-octadecenoate + H(+). The enzyme catalyses 1-hexadecanoyl-2-(5Z,8Z,11Z,14Z-eicosatetraenoyl)-sn-glycero-3-phosphocholine + H2O = 1-hexadecanoyl-sn-glycero-3-phosphocholine + (5Z,8Z,11Z,14Z)-eicosatetraenoate + H(+). The catalysed reaction is 1-hexadecanoyl-2-(9Z-octadecenoyl)-sn-glycero-3-phospho-(1'-sn-glycerol) + H2O = 1-hexadecanoyl-sn-glycero-3-phospho-(1'-sn-glycerol) + (9Z)-octadecenoate + H(+). It carries out the reaction N-hexadecanoyl-1,2-di-(9Z-octadecenoyl)-sn-glycero-3-phosphoethanolamine + H2O = N-hexadecanoyl-1-(9Z-octadecenoyl)-sn-glycero-3-phosphoethanolamine + (9Z)-octadecenoate + H(+). It catalyses the reaction 1-hexadecanoyl-2-(9Z,12Z-octadecadienoyl)-sn-glycero-3-phosphoethanolamine + H2O = 1-hexadecanoyl-sn-glycero-3-phosphoethanolamine + (9Z,12Z)-octadecadienoate + H(+). The enzyme catalyses N,1-dihexadecanoyl-2-(9Z,12Z-octadecadienoyl)-sn-glycero-3-phosphoethanolamine + H2O = N,1-dihexadecanoyl-sn-glycero-3-phosphoethanolamine + (9Z,12Z)-octadecadienoate + H(+). Functionally, secretory calcium-dependent phospholipase A2 that primarily targets dietary phospholipids in the intestinal tract. Hydrolyzes the ester bond of the fatty acyl group attached at sn-2 position of phospholipids (phospholipase A2 activity) with preference for phosphatidylethanolamines and phosphatidylglycerols over phosphatidylcholines. May play a role in the biosynthesis of N-acyl ethanolamines that regulate energy metabolism and inflammation in the intestinal tract. Hydrolyzes N-acyl phosphatidylethanolamines to N-acyl lysophosphatidylethanolamines, which are further cleaved by a lysophospholipase D to release N-acyl ethanolamines. May act in an autocrine and paracrine manner. Has anti-helminth activity in a process regulated by gut microbiota. Upon helminth infection of intestinal epithelia, directly affects phosphatidylethanolamine contents in the membrane of helminth larvae, likely controlling an array of phospholipid-mediated cellular processes such as membrane fusion and cell division while providing for better immune recognition, ultimately reducing larvae integrity and infectivity. In Bos taurus (Bovine), this protein is Phospholipase A2 (PLA2G1B).